The following is a 243-amino-acid chain: Uridylate kinase (243 aa).

Residue 15-18 participates in ATP binding; the sequence is KLSG. Positions 23–28 are involved in allosteric activation by GTP; it reads GEEGFG. Gly-57 serves as a coordination point for UMP. 2 residues coordinate ATP: Gly-58 and Arg-62. Residues Asp-77 and 138 to 145 each bind UMP; that span reads TGNPFFTT. Positions 165, 171, and 174 each coordinate ATP.

The protein belongs to the UMP kinase family. As to quaternary structure, homohexamer.

The protein localises to the cytoplasm. The enzyme catalyses UMP + ATP = UDP + ADP. It functions in the pathway pyrimidine metabolism; CTP biosynthesis via de novo pathway; UDP from UMP (UMPK route): step 1/1. With respect to regulation, allosterically activated by GTP. Inhibited by UTP. In terms of biological role, catalyzes the reversible phosphorylation of UMP to UDP. This Vibrio campbellii (strain ATCC BAA-1116) protein is Uridylate kinase.